Consider the following 457-residue polypeptide: MFKTLYARIAIYSITVILFSALISFVLTNVYYHYNLKASNDAKIMKTLKEARQYEQSAKPTHIQQYFKHLGQMNYQIMTIDQKGHKTFYGEPFREDTLSQNAINNVLNNQDYHGIKDKPFALFVTGFFDNVTDNTVGINFKTKDGSIAVFMRPDIGETFSEFRTFLAVLLMLLLFISISLVIASTYSIIRPVKKLKLATERLIDGDFETPIKQTRKDEIGTLQYHFNKMRESLGQVDQMRQHFVQNVSHEIKTPLTHIHHLLSELQQTSDKTLRQQYINDIYTITTQLSGLTTELLLLSELDNHQHLLFDDKIQVNQLIKDIIRHEQFAADEKSLIILADLESINFLGNQRLLHQALSNLLINAIKYTDVGGAIDIALQHSHNNIIFTISNDGSPISPQAEARLFERFYKVSKHDNSNGLGLAITKSIIELHHGTIQFTQSNEYVTTFTITLPNNSL.

The next 2 helical transmembrane spans lie at 9 to 29 (IAIYSITVILFSALISFVLTN) and 164 to 184 (TFLAVLLMLLLFISISLVIAS). The HAMP domain occupies 186–238 (YSIIRPVKKLKLATERLIDGDFETPIKQTRKDEIGTLQYHFNKMRESLGQVDQ). Residues 246–456 (NVSHEIKTPL…TFTITLPNNS (211 aa)) form the Histidine kinase domain. At His249 the chain carries Phosphohistidine; by autocatalysis.

Autophosphorylated.

The protein resides in the cell membrane. The catalysed reaction is ATP + protein L-histidine = ADP + protein N-phospho-L-histidine.. Functionally, member of the two-component regulatory system HssS/HssR involved in intracellular heme homeostasis and tempering of staphylococcal virulence. HssS functions as a heme sensor histidine kinase which is autophosphorylated at a histidine residue and transfers its phosphate group to an aspartate residue of HssR. HssR/HssS activates the expression of hrtAB, an efflux pump, in response to extracellular heme, hemin, hemoglobin or blood. The chain is Heme sensor protein HssS (hssS) from Staphylococcus aureus (strain USA300).